The following is a 1029-amino-acid chain: U2 snRNP-associated SURP motif-containing protein (1029 aa).

Disordered regions lie at residues 1 to 110 (MADK…KEDE) and 141 to 273 (VNAA…DPST). A2 carries the post-translational modification N-acetylalanine. Positions 7–16 (GGSQKASSKN) are enriched in polar residues. Over residues 45-54 (TRPKSPRKHN) the composition is skewed to basic residues. Basic and acidic residues predominate over residues 55–64 (YRNESSRESL). A Phosphoserine modification is found at S67. K80 participates in a covalent cross-link: Glycyl lysine isopeptide (Lys-Gly) (interchain with G-Cter in SUMO2). A coiled-coil region spans residues 92 to 121 (AKRTLSKKEQEELKKKEDEKAAAEIYEEFL). Composition is skewed to basic and acidic residues over residues 97-110 (SKKE…KEDE) and 144-155 (AKDEHETDEKRG). Residues K145 and K168 each participate in a glycyl lysine isopeptide (Lys-Gly) (interchain with G-Cter in SUMO2) cross-link. The span at 169–178 (NPPNQSSNER) shows a compositional bias: polar residues. Residues 186 to 222 (ETKKPPLKKGEKEKKKSNLELFKEELKQIQEERDERH) are compositionally biased toward basic and acidic residues. Positions 192–232 (LKKGEKEKKKSNLELFKEELKQIQEERDERHKTKGRLSRFE) form a coiled coil. At S202 the chain carries Phosphoserine. A Glycyl lysine isopeptide (Lys-Gly) (interchain with G-Cter in SUMO2) cross-link involves residue K208. Position 236 is a phosphoserine (S236). Over residues 239 to 249 (DGQRRSMDVPS) the composition is skewed to basic and acidic residues. The RRM domain occupies 274-355 (TNLYLGNINP…FEMKLGWGKA (82 aa)). One copy of the SURP motif repeat lies at 430 to 473 (LIHRMIEFVVREGPMFEAMIMNREINNPMFRFLFENQTPAHVYY). At S485 the chain carries Phosphoserine. A CID domain is found at 534–679 (LKEEQRDKLE…KLQNIFLGLV (146 aa)). Residues 704-729 (DGAPLEDVDGIPIDATPIDDLDGVPI) are disordered. T719 carries the post-translational modification Phosphothreonine. Glycyl lysine isopeptide (Lys-Gly) (interchain with G-Cter in SUMO2) cross-links involve residues K748 and K749. K760 carries the N6-acetyllysine; alternate modification. K760 participates in a covalent cross-link: Glycyl lysine isopeptide (Lys-Gly) (interchain with G-Cter in SUMO2); alternate. Disordered regions lie at residues 778-841 (KWEL…EEKR) and 855-1029 (QDEL…KNKH). The segment covering 786 to 806 (EESEEEENQNQEEESEDEEDT) has biased composition (acidic residues). S788, S800, and S811 each carry phosphoserine. Composition is skewed to basic and acidic residues over residues 810-841 (KSEE…EEKR) and 874-922 (QVEH…TPTR). Residues K829 and K832 each participate in a glycyl lysine isopeptide (Lys-Gly) (interchain with G-Cter in SUMO2) cross-link. Residues 837-915 (SEEKRAKLRE…ESRSKDKKEK (79 aa)) adopt a coiled-coil conformation. A Phosphothreonine modification is found at T931. S946 and S948 each carry phosphoserine. The segment covering 950-980 (KSERSERSERSHKESSRSRSSHKDSPRDASK) has biased composition (basic and acidic residues). Basic residues predominate over residues 991–1029 (TPKRSRRSRSRSPKKSGKKSRSQSRSPHRSHKKSKKNKH).

It belongs to the splicing factor SR family. In terms of assembly, interacts with ERBB4.

The protein resides in the nucleus. The sequence is that of U2 snRNP-associated SURP motif-containing protein (U2surp) from Mus musculus (Mouse).